A 393-amino-acid chain; its full sequence is Sulfate adenylyltransferase (393 aa).

It belongs to the sulfate adenylyltransferase family.

The catalysed reaction is sulfate + ATP + H(+) = adenosine 5'-phosphosulfate + diphosphate. Its pathway is sulfur metabolism; hydrogen sulfide biosynthesis; sulfite from sulfate: step 1/3. This is Sulfate adenylyltransferase from Synechococcus sp. (strain JA-3-3Ab) (Cyanobacteria bacterium Yellowstone A-Prime).